The following is a 434-amino-acid chain: Histidinol dehydrogenase (434 aa).

NAD(+) contacts are provided by Y130, Q192, and N215. 3 residues coordinate substrate: S238, Q260, and H263. 2 residues coordinate Zn(2+): Q260 and H263. Residues E328 and H329 each act as proton acceptor in the active site. Substrate contacts are provided by H329, D362, E416, and H421. D362 contacts Zn(2+). H421 serves as a coordination point for Zn(2+).

This sequence belongs to the histidinol dehydrogenase family. The cofactor is Zn(2+).

The catalysed reaction is L-histidinol + 2 NAD(+) + H2O = L-histidine + 2 NADH + 3 H(+). Its pathway is amino-acid biosynthesis; L-histidine biosynthesis; L-histidine from 5-phospho-alpha-D-ribose 1-diphosphate: step 9/9. Its function is as follows. Catalyzes the sequential NAD-dependent oxidations of L-histidinol to L-histidinaldehyde and then to L-histidine. The polypeptide is Histidinol dehydrogenase (Synechococcus sp. (strain ATCC 27144 / PCC 6301 / SAUG 1402/1) (Anacystis nidulans)).